Reading from the N-terminus, the 171-residue chain is CASP-like protein 5A2 (171 aa).

The Cytoplasmic portion of the chain corresponds to 1 to 39; it reads MDGSAHLRDPPGPAVLRWRLEDMHIIPGTSGSLALRICQ. Residues 40–60 form a helical membrane-spanning segment; sequence FSAAIVSFSVMISAANFSSVT. A topological domain (extracellular) is located at residue A61. Residues 62–82 form a helical membrane-spanning segment; sequence FCFLVAAMVLQCMWSLSVATI. Topologically, residues 83–106 are cytoplasmic; that stretch reads EGYAMLVGRSLRDSPLLSLFAVGD. Residues 107 to 127 form a helical membrane-spanning segment; that stretch reads WVTAVITFAGACASAGIAVLV. The Extracellular portion of the chain corresponds to 128 to 148; that stretch reads GRDIHRGCDVNFCGRYAAAAG. The helical transmembrane segment at 149–169 threads the bilayer; that stretch reads MAFLSWLLISTSFLFTFWLLA. The Cytoplasmic portion of the chain corresponds to 170–171; sequence TR.

Belongs to the Casparian strip membrane proteins (CASP) family. As to quaternary structure, homodimer and heterodimers.

Its subcellular location is the cell membrane. This is CASP-like protein 5A2 from Pteridium aquilinum subsp. aquilinum (Bracken fern).